Consider the following 280-residue polypeptide: NAD kinase (280 aa).

The active-site Proton acceptor is the Asp60. NAD(+)-binding positions include 60-61 (DG), 134-135 (ND), Arg145, Asp164, 175-180 (TAYSLS), and Gln234.

Belongs to the NAD kinase family. The cofactor is a divalent metal cation.

The protein resides in the cytoplasm. It carries out the reaction NAD(+) + ATP = ADP + NADP(+) + H(+). In terms of biological role, involved in the regulation of the intracellular balance of NAD and NADP, and is a key enzyme in the biosynthesis of NADP. Catalyzes specifically the phosphorylation on 2'-hydroxyl of the adenosine moiety of NAD to yield NADP. This chain is NAD kinase, found in Carboxydothermus hydrogenoformans (strain ATCC BAA-161 / DSM 6008 / Z-2901).